Here is a 373-residue protein sequence, read N- to C-terminus: mRNA-decapping enzyme subunit 2 (373 aa).

The region spanning 106-234 (CRVPVTGAII…HGVSGLKLYM (129 aa)) is the Nudix hydrolase domain. A Nudix box motif is present at residues 139–160 (GKKSKDEEDHACAIREVLEETG). Positions 154 and 158 each coordinate Mg(2+). ATP contacts are provided by arginine 178 and tyrosine 233. Residues 233–250 (YMVAPFLSSLKSWILKHP) form an RNA binding region. The tract at residues 275–342 (GNGTATVESQ…ESHNTKPVVD (68 aa)) is disordered. Basic and acidic residues predominate over residues 298 to 323 (NSRKPELKRTTMESHSTKPELRKGTM). Polar residues predominate over residues 324 to 334 (ESHNTTATVES). Positions 370–373 (GNSA) match the PDZ-binding motif.

The protein belongs to the Nudix hydrolase family. DCP2 subfamily. In terms of assembly, homodimer. Catalytic component of the decapping complex. Interacts with DCP1, DCP5 and VCS. Mn(2+) is required as a cofactor. Mg(2+) serves as cofactor. In terms of tissue distribution, expressed in seedlings, mostly in root tips, root hairs, and the vascular system. Also present in roots, leaves, stems, and flowers.

The protein resides in the cytoplasm. It localises to the P-body. It catalyses the reaction a 5'-end (N(7)-methyl 5'-triphosphoguanosine)-ribonucleoside in mRNA + H2O = N(7)-methyl-GDP + a 5'-end phospho-ribonucleoside in mRNA + 2 H(+). With respect to regulation, inhibited by the product 7-methyl GDP. Its function is as follows. Catalytic component of the decapping complex necessary for the degradation of mRNAs, both in normal mRNA turnover and in nonsense-mediated mRNA decay. Removes the 7-methyl guanine cap structure from mRNA molecules, yielding a 5'-phosphorylated mRNA fragment and 7m-GDP. Essential for postembryonic development, especially during the formation of the shoot apical meristem (SAM). The sequence is that of mRNA-decapping enzyme subunit 2 (DCP2) from Arabidopsis thaliana (Mouse-ear cress).